The sequence spans 469 residues: Sorting and assembly machinery component 50 homolog (469 aa).

One can recognise a POTRA domain in the interval 45–125 (VVVQHVHFDG…LDVTFEVTEL (81 aa)). The residue at position 255 (K255) is an N6-methyllysine.

It belongs to the SAM50/omp85 family. Associates with the mitochondrial contact site and cristae organizing system (MICOS) complex, composed of at least MICOS10/MIC10, CHCHD3/MIC19, CHCHD6/MIC25, APOOL/MIC27, IMMT/MIC60, APOO/MIC23/MIC26 and QIL1/MIC13. This complex was also known under the names MINOS or MitOS complex. The MICOS complex associates with mitochondrial outer membrane proteins SAMM50, MTX1 and MTX2 (together described as components of the mitochondrial outer membrane sorting assembly machinery (SAM) complex) and DNAJC11, mitochondrial inner membrane protein TMEM11 and with HSPA9. The MICOS and SAM complexes together with DNAJC11 are part of a large protein complex spanning both membranes termed the mitochondrial intermembrane space bridging (MIB) complex. Interacts with IMMT/MIC60. Interacts with CHCHD3/MIC19. Interacts with ARMC1. As to quaternary structure, (Microbial infection) Interacts with parasite T.gondii RH strain MAF1b1; the interaction is probably indirect and results in the disruption of the MIB complex and the formation of SPOTs (structures positive for outer mitochondrial membrane (OMM)), a cellular response to OMM stress, which leads to the constitutive shedding of OMM vesicles.

The protein resides in the mitochondrion outer membrane. It is found in the cytoplasm. It localises to the mitochondrion. In terms of biological role, plays a crucial role in the maintenance of the structure of mitochondrial cristae and the proper assembly of the mitochondrial respiratory chain complexes. Required for the assembly of TOMM40 into the TOM complex. The sequence is that of Sorting and assembly machinery component 50 homolog (Samm50) from Mus musculus (Mouse).